We begin with the raw amino-acid sequence, 98 residues long: SPbeta prophage-derived uncharacterized protein YorB (98 aa).

The protein is SPbeta prophage-derived uncharacterized protein YorB (yorB) of Bacillus subtilis (strain 168).